Consider the following 92-residue polypeptide: DNA-directed RNA polymerase subunit Rpo11 (92 aa).

The protein belongs to the archaeal Rpo11/eukaryotic RPB11/RPC19 RNA polymerase subunit family. Part of the RNA polymerase complex.

The protein localises to the cytoplasm. The catalysed reaction is RNA(n) + a ribonucleoside 5'-triphosphate = RNA(n+1) + diphosphate. In terms of biological role, DNA-dependent RNA polymerase (RNAP) catalyzes the transcription of DNA into RNA using the four ribonucleoside triphosphates as substrates. The protein is DNA-directed RNA polymerase subunit Rpo11 of Halorubrum lacusprofundi (strain ATCC 49239 / DSM 5036 / JCM 8891 / ACAM 34).